A 207-amino-acid polypeptide reads, in one-letter code: Vascular endothelial growth factor B (207 aa).

Positions Met1 to Ala21 are cleaved as a signal peptide. Intrachain disulfides connect Cys47/Cys89, Cys78/Cys122, and Cys82/Cys124. A compositionally biased stretch (basic and acidic residues) spans Cys122 to Ala139. Positions Cys122–Ala207 are disordered. The span at Pro174 to Ala207 shows a compositional bias: low complexity.

It belongs to the PDGF/VEGF growth factor family. Homodimer; disulfide-linked. Can also form heterodimer with VEGF. Post-translationally, VEGF-B186 is O-glycosylated. As to expression, expressed in all tissues except liver. Highest levels found in heart, skeletal muscle and pancreas.

Its subcellular location is the secreted. Growth factor for endothelial cells. VEGF-B167 binds heparin and neuropilin-1 whereas the binding to neuropilin-1 of VEGF-B186 is regulated by proteolysis. The protein is Vascular endothelial growth factor B (VEGFB) of Homo sapiens (Human).